The chain runs to 216 residues: Adenylate kinase (216 aa).

10–15 contacts ATP; it reads GAGKGT. The tract at residues 30-59 is NMP; the sequence is STGDMIRETIKSDSEIGKELKKVLDAGQLV. AMP-binding positions include T31, R36, 57–59, and Q92; that span reads QLV. The interval 122-159 is LID; sequence GRRVHPASGRTYHTKFNPPKVEGKDDITGEDLITRTDD. ATP contacts are provided by residues R123 and 132-133; that span reads TY. The AMP site is built by R156 and R167. Q202 serves as a coordination point for ATP.

This sequence belongs to the adenylate kinase family. In terms of assembly, monomer.

The protein resides in the cytoplasm. The catalysed reaction is AMP + ATP = 2 ADP. It participates in purine metabolism; AMP biosynthesis via salvage pathway; AMP from ADP: step 1/1. Catalyzes the reversible transfer of the terminal phosphate group between ATP and AMP. Plays an important role in cellular energy homeostasis and in adenine nucleotide metabolism. The protein is Adenylate kinase of Francisella philomiragia subsp. philomiragia (strain ATCC 25017 / CCUG 19701 / FSC 153 / O#319-036).